Reading from the N-terminus, the 643-residue chain is MELKGVQPSNGSPNGNGNGATNAASTEKTDAEKPTAERTNWGNGLEFLMSCISVSVGLGNVWRFPFTAYENGGGAFLIPYIIVLFLIGKPMYYLEMIMGQFTSQGTVKIWSVVPGFVGVGYGQAFGTICIISYYSSLLALTLYYLFVSFQSELPWSYCRDEWTNCVNSRPEEYVDNLLTGVSLANESARNLSGIGLVANNETEKLQSSSELYFLNVVIKEKLDISDGVGDPDWKLTLALFVAWVVIFLVIMRGVKSSGKAAYFLALFPYVVLFVLLIRAVTLEGARDGILFFLEPQWGELLNPTVWKEAVVQCFFSLAVGSGPIIMFASYNRFDHGIYRDAMIVTTLDTLTSLLGGITIFAILGNLAHNLQIENIRDVVRSGTGLAFISYPDAISKFQAVPQLFSVLFFFMLFVLGIGSIVALQSTIVTIICDQFKGWKYWKVALTTSVCGFLMGLVYVTPGGQWILTLVDFYGGTYVVFILAIFELAGIVWVYGLQNFCDDIEFMCNRRVSLYWRVCWSFFTPVMMIIIFIYSMATIEPIKYSELYFPEAANVAGWLLFAIGAAQFPLWGLWYASRHPQGTYWKSLKASLKPSDRWGPANPETRREWVIFKNQKAPQRATQKDTSKLGFFWRKIANFCGSNK.

The interval 1 to 38 is disordered; that stretch reads MELKGVQPSNGSPNGNGNGATNAASTEKTDAEKPTAER. Over 1-40 the chain is Cytoplasmic; sequence MELKGVQPSNGSPNGNGNGATNAASTEKTDAEKPTAERTN. Residues 8–26 are compositionally biased toward low complexity; it reads PSNGSPNGNGNGATNAAST. Basic and acidic residues predominate over residues 27–36; that stretch reads EKTDAEKPTA. A run of 3 helical transmembrane segments spans residues 41–61, 74–94, and 111–131; these read WGNG…LGNV, GAFL…MYYL, and SVVP…ICII. N-linked (GlcNAc...) asparagine glycans are attached at residues Asn185, Asn190, and Asn200. 9 helical membrane passes run 231-251, 260-280, 309-329, 343-363, 403-423, 449-469, 476-496, 518-538, and 554-574; these read PDWK…LVIM, AAYF…IRAV, AVVQ…MFAS, IVTT…FAIL, LFSV…IVAL, VCGF…ILTL, TYVV…VYGL, CWSF…MATI, and VAGW…GLWY.

This sequence belongs to the sodium:neurotransmitter symporter (SNF) (TC 2.A.22) family.

Its subcellular location is the membrane. In terms of biological role, unusual broad substrate spectrum amino acid:sodium cotransporter that promotes absorption of the D isomers of essential amino acids. Neutral amino acids are the preferred substrates, especially methionine and phenylalanine. This chain is Sodium-dependent nutrient amino acid transporter 1, found in Drosophila simulans (Fruit fly).